Here is a 318-residue protein sequence, read N- to C-terminus: Protoheme IX farnesyltransferase (318 aa).

Transmembrane regions (helical) follow at residues 27-47 (IMML…GMTG), 52-72 (PAMA…AGAI), 103-123 (LTMG…ASNW), 124-144 (LAAA…TMWL), 152-172 (IVIG…AVTG), 179-199 (WILF…LSLL), 225-245 (ILVY…TGLG), 248-268 (IYGA…VAIL), and 288-308 (AFLF…VEHA).

It belongs to the UbiA prenyltransferase family. Protoheme IX farnesyltransferase subfamily. As to quaternary structure, interacts with CtaA.

Its subcellular location is the cell inner membrane. The enzyme catalyses heme b + (2E,6E)-farnesyl diphosphate + H2O = Fe(II)-heme o + diphosphate. It participates in porphyrin-containing compound metabolism; heme O biosynthesis; heme O from protoheme: step 1/1. Functionally, converts heme B (protoheme IX) to heme O by substitution of the vinyl group on carbon 2 of heme B porphyrin ring with a hydroxyethyl farnesyl side group. The chain is Protoheme IX farnesyltransferase from Hyphomonas neptunium (strain ATCC 15444).